The chain runs to 412 residues: Putative disintegrin and metalloproteinase domain-containing protein 5 (412 aa).

The region spanning 111-199 (EKYADTNILL…YCLPDTYVRD (89 aa)) is the Disintegrin domain. An EGF-like domain is found at 351–385 (NLKLCDASNHCDRHGVCNNFNHCHCEKGYNPPYCQ).

Interacts with TEX101. In terms of tissue distribution, highly expressed in testis.

Functionally, this is a non catalytic metalloprotease-like protein. The protein is Putative disintegrin and metalloproteinase domain-containing protein 5 (ADAM5) of Homo sapiens (Human).